Here is a 226-residue protein sequence, read N- to C-terminus: Uracil-DNA glycosylase (226 aa).

D65 functions as the Proton acceptor in the catalytic mechanism.

Belongs to the uracil-DNA glycosylase (UDG) superfamily. UNG family.

It localises to the cytoplasm. The enzyme catalyses Hydrolyzes single-stranded DNA or mismatched double-stranded DNA and polynucleotides, releasing free uracil.. Its function is as follows. Excises uracil residues from the DNA which can arise as a result of misincorporation of dUMP residues by DNA polymerase or due to deamination of cytosine. The protein is Uracil-DNA glycosylase of Bacillus pumilus (strain SAFR-032).